The primary structure comprises 204 residues: Recombination protein RecR (204 aa).

The C4-type zinc finger occupies 63–78 (CRICCNVADSELCPIC). A Toprim domain is found at 86–181 (NKICVVEQPQ…KVTRLARGLP (96 aa)).

The protein belongs to the RecR family.

Functionally, may play a role in DNA repair. It seems to be involved in an RecBC-independent recombinational process of DNA repair. It may act with RecF and RecO. The polypeptide is Recombination protein RecR (Dehalococcoides mccartyi (strain ATCC BAA-2100 / JCM 16839 / KCTC 5957 / BAV1)).